We begin with the raw amino-acid sequence, 286 residues long: Probable aquaporin PIP2-5 (286 aa).

The residue at position 1 (methionine 1) is an N-acetylmethionine. The segment covering 1–18 (MTKEVVGDKRSFSGKDYQ) has biased composition (basic and acidic residues). Positions 1–23 (MTKEVVGDKRSFSGKDYQDPPPE) are disordered. At 1–38 (MTKEVVGDKRSFSGKDYQDPPPEPLFDATELGKWSFYR) the chain is on the cytoplasmic side. Lysine 3 carries the N6,N6-dimethyllysine modification. Residues 39–59 (ALIAEFIATLLFLYVTIMTVI) traverse the membrane as a helical segment. Topologically, residues 60–75 (GYKSQTDPALNPDQCT) are extracellular. The chain crosses the membrane as a helical span at residues 76–96 (GVGVLGIAWAFGGMIFILVYC). Residues 97–124 (TAGISGGHINPAVTFGLLLARKVTLVRA) are Cytoplasmic-facing. The NPA 1 motif lies at 106–108 (NPA). Residues 125–145 (VMYMVAQCLGAICGVALVKAF) form a helical membrane-spanning segment. At 146 to 165 (QSAYFTRYGGGANGLSDGYS) the chain is on the extracellular side. A helical transmembrane segment spans residues 166–186 (IGTGVAAEIIGTFVLVYTVFS). Topologically, residues 187 to 200 (ATDPKRSARDSHVP) are cytoplasmic. The chain crosses the membrane as a helical span at residues 201–221 (VLAPLPIGFAVFIVHLATIPI). Residues 222-248 (TGTGINPARSLGAAIIYNKDKAWDHHW) are Extracellular-facing. The short motif at 227–229 (NPA) is the NPA 2 element. Residues 249 to 269 (IFWVGPFAGAAIAAFYHQFVL) traverse the membrane as a helical segment. Over 270–286 (RAGAIKALGSFRSQPHV) the chain is Cytoplasmic. 2 positions are modified to phosphoserine: serine 279 and serine 282.

This sequence belongs to the MIP/aquaporin (TC 1.A.8) family. PIP (TC 1.A.8.11) subfamily. Expressed in green siliques.

It is found in the cell membrane. Functionally, aquaporins facilitate the transport of water and small neutral solutes across cell membranes. This is Probable aquaporin PIP2-5 (PIP2-5) from Arabidopsis thaliana (Mouse-ear cress).